A 242-amino-acid chain; its full sequence is tRNA pseudouridine synthase A (242 aa).

Aspartate 51 functions as the Nucleophile in the catalytic mechanism. Residue tyrosine 107 coordinates substrate.

The protein belongs to the tRNA pseudouridine synthase TruA family. In terms of assembly, homodimer.

It carries out the reaction uridine(38/39/40) in tRNA = pseudouridine(38/39/40) in tRNA. Formation of pseudouridine at positions 38, 39 and 40 in the anticodon stem and loop of transfer RNAs. The polypeptide is tRNA pseudouridine synthase A (Helicobacter pylori (strain J99 / ATCC 700824) (Campylobacter pylori J99)).